We begin with the raw amino-acid sequence, 340 residues long: Phosphoribosylformylglycinamidine cyclo-ligase (340 aa).

This sequence belongs to the AIR synthase family.

It is found in the cytoplasm. The enzyme catalyses 2-formamido-N(1)-(5-O-phospho-beta-D-ribosyl)acetamidine + ATP = 5-amino-1-(5-phospho-beta-D-ribosyl)imidazole + ADP + phosphate + H(+). Its pathway is purine metabolism; IMP biosynthesis via de novo pathway; 5-amino-1-(5-phospho-D-ribosyl)imidazole from N(2)-formyl-N(1)-(5-phospho-D-ribosyl)glycinamide: step 2/2. The polypeptide is Phosphoribosylformylglycinamidine cyclo-ligase (Streptococcus pyogenes serotype M1).